The sequence spans 112 residues: Putative pterin-4-alpha-carbinolamine dehydratase (112 aa).

It belongs to the pterin-4-alpha-carbinolamine dehydratase family.

It carries out the reaction (4aS,6R)-4a-hydroxy-L-erythro-5,6,7,8-tetrahydrobiopterin = (6R)-L-erythro-6,7-dihydrobiopterin + H2O. In Shewanella pealeana (strain ATCC 700345 / ANG-SQ1), this protein is Putative pterin-4-alpha-carbinolamine dehydratase.